The primary structure comprises 172 residues: Gastrula zinc finger protein XlCGF51.1A (172 aa).

6 C2H2-type zinc fingers span residues Phe-6–His-28, Leu-34–His-56, Phe-62–His-84, Phe-90–His-112, Leu-122–His-144, and Leu-150–His-172.

It belongs to the krueppel C2H2-type zinc-finger protein family.

Its subcellular location is the nucleus. Its function is as follows. May be involved in transcriptional regulation. This is Gastrula zinc finger protein XlCGF51.1A from Xenopus laevis (African clawed frog).